The following is a 370-amino-acid chain: Peridinin-chlorophyll a-binding protein 1, chloroplastic (370 aa).

The transit peptide at 1-57 directs the protein to the chloroplast; it reads MVRSGKKAVVLAAVAFCATSVVQKSHGFVPSPLRQRAAAAGAAAASAATMFAPAAFA. 2 consecutive repeat copies span residues 58 to 220 and 221 to 370.

In terms of assembly, homotrimer.

It is found in the plastid. Its subcellular location is the chloroplast. Functionally, water-soluble antenna for capture of solar energy in the blue-green range. Peridinin is an asymmetric carotenoid. This Amphidinium carterae (Dinoflagellate) protein is Peridinin-chlorophyll a-binding protein 1, chloroplastic.